A 292-amino-acid polypeptide reads, in one-letter code: 11-beta-hydroxysteroid dehydrogenase 1 (292 aa).

Topologically, residues 2–7 are cytoplasmic; it reads AFMKKY. A helical; Signal-anchor for type II membrane protein membrane pass occupies residues 8–24; it reads LLPLLGLFLAYYYYSAN. Residues 25–292 lie on the Lumenal side of the membrane; the sequence is EEFRPEMLQG…KFDISKLVNN (268 aa). NADP(+) contacts are provided by residues 41-67, 92-93, and 119-121; these read GASK…TARS, TM, and NHI. 2 N-linked (GlcNAc...) asparagine glycosylation sites follow: N123 and N162. S170 is a binding site for substrate. Residue Y183 is the Proton acceptor of the active site. An NADP(+)-binding site is contributed by 183 to 187; the sequence is YSASK. N207 is a glycosylation site (N-linked (GlcNAc...) asparagine). 218–222 lines the NADP(+) pocket; that stretch reads IDTDT.

This sequence belongs to the short-chain dehydrogenases/reductases (SDR) family. Homodimer. In terms of processing, glycosylated. Expressed in the eye.

The protein localises to the endoplasmic reticulum membrane. It localises to the microsome membrane. The enzyme catalyses an 11beta-hydroxysteroid + NADP(+) = an 11-oxosteroid + NADPH + H(+). The catalysed reaction is corticosterone + NADP(+) = 11-dehydrocorticosterone + NADPH + H(+). It carries out the reaction cortisone + NADPH + H(+) = cortisol + NADP(+). It catalyses the reaction a 7beta-hydroxysteroid + NADP(+) = a 7-oxosteroid + NADPH + H(+). The enzyme catalyses 7-oxocholesterol + NADPH + H(+) = 7beta-hydroxycholesterol + NADP(+). The catalysed reaction is chenodeoxycholate + NADP(+) = 7-oxolithocholate + NADPH + H(+). It carries out the reaction 7-oxolithocholate + NADPH + H(+) = ursodeoxycholate + NADP(+). It catalyses the reaction glycochenodeoxycholate + NADP(+) = 7-oxoglycolithocholate + NADPH + H(+). The enzyme catalyses taurochenodeoxycholate + NADP(+) = 7-oxotaurolithocholate + NADPH + H(+). The catalysed reaction is tauroursodeoxycholate + NADP(+) = 7-oxotaurolithocholate + NADPH + H(+). It carries out the reaction glycoursodeoxycholate + NADP(+) = 7-oxoglycolithocholate + NADPH + H(+). It catalyses the reaction 7-oxopregnenolone + NADPH + H(+) = 7beta-hydroxypregnenolone + NADP(+). The enzyme catalyses 3beta,7alpha-dihydroxyandrost-5-en-17-one + NADP(+) = 3beta-hydroxy-5-androstene-7,17-dione + NADPH + H(+). The catalysed reaction is 3beta-hydroxy-5-androstene-7,17-dione + NADPH + H(+) = 3beta,7beta-dihydroxyandrost-5-en-17-one + NADP(+). It carries out the reaction 3beta-hydroxy-5alpha-androstane-7,17-dione + NADPH + H(+) = 3beta,7beta-dihydroxy-5alpha-androstan-17-one + NADP(+). The protein operates within steroid metabolism. Functionally, controls the reversible conversion of biologically active glucocorticoids such as cortisone to cortisol, and 11-dehydrocorticosterone to corticosterone in the presence of NADP(H). Participates in the corticosteroid receptor-mediated anti-inflammatory response, as well as metabolic and homeostatic processes. Plays a role in the secretion of aqueous humor in the eye, maintaining a normotensive, intraocular environment. Bidirectional in vitro, predominantly functions as a reductase in vivo, thereby increasing the concentration of active glucocorticoids. It has broad substrate specificity, besides glucocorticoids, it accepts other steroid and sterol substrates. It has broad substrate specificity, besides glucocorticoids, it accepts other steroid and sterol substrates. Interconverts 7-oxo- and 7-hydroxy-neurosteroids such as 7-oxopregnenolone and 7beta-hydroxypregnenolone, 7-oxodehydroepiandrosterone (3beta-hydroxy-5-androstene-7,17-dione) and 7beta-hydroxydehydroepiandrosterone (3beta,7beta-dihydroxyandrost-5-en-17-one), among others. Catalyzes the stereo-specific conversion of the major dietary oxysterol, 7-ketocholesterol (7-oxocholesterol), into the more polar 7-beta-hydroxycholesterol metabolite. 7-oxocholesterol is one of the most important oxysterols, it participates in several events such as induction of apoptosis, accumulation in atherosclerotic lesions, lipid peroxidation, and induction of foam cell formation. Mediates the 7-oxo reduction of 7-oxolithocholate mainly to chenodeoxycholate, and to a lesser extent to ursodeoxycholate, both in its free form and when conjugated to glycine or taurine, providing a link between glucocorticoid activation and bile acid metabolism. Catalyzes the synthesis of 7-beta-25-dihydroxycholesterol from 7-oxo-25-hydroxycholesterol in vitro, which acts as a ligand for the G-protein-coupled receptor (GPCR) Epstein-Barr virus-induced gene 2 (EBI2) and may thereby regulate immune cell migration. The protein is 11-beta-hydroxysteroid dehydrogenase 1 of Oryctolagus cuniculus (Rabbit).